A 623-amino-acid polypeptide reads, in one-letter code: MVGHLSEGAIEVMIQQENTSIKPILQVINIRPISTGNRSPRYRLLMSDGLNTLSSFMLATQLNTLVEGGQLASNCVCQVHKFIVNTLKDGRKVVVLMDLEVMKSAEDVGLKIGNPVPYNEGYGQQQQQQQQQQQQAVPSPASAATPPASKPQPQNGSLGMGSTAAKAYGASKPFGKPAGTGLLQPSGGTQSKVVPIASLTPYQSKWTICARVTNKSQIRTWSNSRGEGKLFSLELVDESGEIRATAFNEQVDKFFPLIEVNKVYYFSKGALKIANKQFSAVKNDYEMTFNNETSVLPCEDGHHLPTVQFDFTGIGDLESKAKDALVDIIGICKSYEDSIKITVKSNNREVAKRNIYLMDMSGKVVTTTLWGEDADKFDGSRQPVMAIKGARVSDFGGRSLSVLSSSTVIVNPDIPEAYKLRGWFDSEGQALDGVSISDHRSGGAGGGNTNWKTLHEAKSENLGQGDKADYFSTVAAVVFLRKENCMYQACPTQDCNKKVIDQQNGLYRCEKCDREFPNFKYRMILSANIADFQENQWVTCFQESAEAILGQNTMYLGELKEKNEQAFEEVFQNANFRSFTFRIRVKLETYNDESRIKATVMDVKPVDFRDYGRRLIANIRKNM.

Methionine 1 carries the post-translational modification N-acetylmethionine. Residues lysine 22 and lysine 88 each participate in a glycyl lysine isopeptide (Lys-Gly) (interchain with G-Cter in ubiquitin) cross-link. The interval 116–163 (VPYNEGYGQQQQQQQQQQQQAVPSPASAATPPASKPQPQNGSLGMGST) is disordered. Residues 124-154 (QQQQQQQQQQQQAVPSPASAATPPASKPQPQ) show a composition bias toward low complexity. N6-acetyllysine; alternate is present on residues lysine 172 and lysine 176. Glycyl lysine isopeptide (Lys-Gly) (interchain with G-Cter in ubiquitin); alternate cross-links involve residues lysine 172 and lysine 176. Residue threonine 189 is modified to Phosphothreonine. Residue lysine 192 forms a Glycyl lysine isopeptide (Lys-Gly) (interchain with G-Cter in ubiquitin) linkage. At threonine 200 the chain carries Phosphothreonine. The segment at residues 206 to 290 (WTICARVTNK…VKNDYEMTFN (85 aa)) is a DNA-binding region (OB). Glycyl lysine isopeptide (Lys-Gly) (interchain with G-Cter in ubiquitin) cross-links involve residues lysine 229 and lysine 253. N6-acetyllysine; alternate is present on lysine 268. A Glycyl lysine isopeptide (Lys-Gly) (interchain with G-Cter in ubiquitin); alternate cross-link involves residue lysine 268. Residues lysine 276 and lysine 340 each participate in a glycyl lysine isopeptide (Lys-Gly) (interchain with G-Cter in ubiquitin) cross-link. Residue serine 393 is modified to Phosphoserine. Lysine 419 is covalently cross-linked (Glycyl lysine isopeptide (Lys-Gly) (interchain with G-Cter in ubiquitin)). Lysine 458 participates in a covalent cross-link: Glycyl lysine isopeptide (Lys-Gly) (interchain with G-Cter in SUMO). Lysine 467 participates in a covalent cross-link: Glycyl lysine isopeptide (Lys-Gly) (interchain with G-Cter in ubiquitin). The C4-type zinc finger occupies 490–512 (CPTQDCNKKVIDQQNGLYRCEKC). A Glycyl lysine isopeptide (Lys-Gly) (interchain with G-Cter in ubiquitin) cross-link involves residue lysine 562. Lysine 586 is covalently cross-linked (Glycyl lysine isopeptide (Lys-Gly) (interchain with G-Cter in SUMO)).

Belongs to the replication factor A protein 1 family. In terms of assembly, component of the canonical replication protein A complex (RPA), a heterotrimer composed of RPA1, RPA2 and RPA3. The DNA-binding activity may reside exclusively on the RPA1 subunit. Interacts with PRPF19; the PRP19-CDC5L complex is recruited to the sites of DNA repair where it ubiquitinates the replication protein A complex (RPA). Interacts with RIPK1. Interacts with the polymerase alpha subunit POLA1/p180; this interaction stabilizes the replicative complex and reduces the misincorporation rate of DNA polymerase alpha by acting as a fidelity clamp. Interacts with RAD51 and SENP6 to regulate DNA repair. Interacts with HELB; this interaction promotes HELB recruitment to chromatin following DNA damage. Interacts with PRIMPOL; leading to recruit PRIMPOL on chromatin and stimulate its DNA primase activity. Interacts with XPA; the interaction is direct and associates XPA with the RPA complex. Interacts with ETAA1; the interaction is direct and promotes ETAA1 recruitment at stalled replication forks. Interacts with RPA1; this interaction associates HROB with the RPA complex. Interacts (when poly-ADP-ribosylated) with HTATSF1. DNA damage-induced 'Lys-63'-linked polyubiquitination by PRPF19 mediates ATRIP recruitment to the RPA complex at sites of DNA damage and activation of ATR. Ubiquitinated by RFWD3 at stalled replication forks in response to DNA damage: ubiquitination by RFWD3 does not lead to degradation by the proteasome and promotes removal of the RPA complex from stalled replication forks, promoting homologous recombination. Post-translationally, sumoylated on lysine residues Lys-458 and Lys-586, with Lys-458 being the major site. Sumoylation promotes recruitment of RAD51 to the DNA damage foci to initiate DNA repair through homologous recombination. Desumoylated by SENP6. In terms of processing, poly-ADP-ribosylated by PARP1; promoting recruitment of HTATSF1.

It localises to the nucleus. Its subcellular location is the PML body. In terms of biological role, as part of the heterotrimeric replication protein A complex (RPA/RP-A), binds and stabilizes single-stranded DNA intermediates, that form during DNA replication or upon DNA stress. It prevents their reannealing and in parallel, recruits and activates different proteins and complexes involved in DNA metabolism. Thereby, it plays an essential role both in DNA replication and the cellular response to DNA damage. In the cellular response to DNA damage, the RPA complex controls DNA repair and DNA damage checkpoint activation. Through recruitment of ATRIP activates the ATR kinase a master regulator of the DNA damage response. It is required for the recruitment of the DNA double-strand break repair factors RAD51 and RAD52 to chromatin in response to DNA damage. Also recruits to sites of DNA damage proteins like XPA and XPG that are involved in nucleotide excision repair and is required for this mechanism of DNA repair. Also plays a role in base excision repair (BER) probably through interaction with UNG. Also recruits SMARCAL1/HARP, which is involved in replication fork restart, to sites of DNA damage. May also play a role in telomere maintenance. In Mus musculus (Mouse), this protein is Replication protein A 70 kDa DNA-binding subunit (Rpa1).